The chain runs to 258 residues: Allene oxide cyclase 3, chloroplastic (258 aa).

The transit peptide at 1-56 (MASSSAAMSLESISMTTLNNLSRNHQSHRSSLLGFSRSFQNLGISSNGPDFSSRSR) directs the protein to the chloroplast.

The protein belongs to the allene oxide cyclase family. As to expression, highly expressed in fully developed leaves.

It is found in the plastid. The protein localises to the chloroplast. The catalysed reaction is (9Z,13S,15Z)-12,13-epoxyoctadeca-9,11,15-trienoate = (9S,13S,15Z)-12-oxophyto-10,15-dienoate. Involved in the production of 12-oxo-phytodienoic acid (OPDA), a precursor of jasmonic acid. This Arabidopsis thaliana (Mouse-ear cress) protein is Allene oxide cyclase 3, chloroplastic (AOC3).